We begin with the raw amino-acid sequence, 367 residues long: Succinyl-diaminopimelate desuccinylase (367 aa).

Residue histidine 64 participates in Zn(2+) binding. Residue aspartate 66 is part of the active site. Zn(2+) is bound at residue aspartate 95. Glutamate 125 functions as the Proton acceptor in the catalytic mechanism. Glutamate 126, glutamate 154, and histidine 339 together coordinate Zn(2+).

Belongs to the peptidase M20A family. DapE subfamily. As to quaternary structure, homodimer. The cofactor is Zn(2+). Co(2+) is required as a cofactor.

It carries out the reaction N-succinyl-(2S,6S)-2,6-diaminopimelate + H2O = (2S,6S)-2,6-diaminopimelate + succinate. The protein operates within amino-acid biosynthesis; L-lysine biosynthesis via DAP pathway; LL-2,6-diaminopimelate from (S)-tetrahydrodipicolinate (succinylase route): step 3/3. In terms of biological role, catalyzes the hydrolysis of N-succinyl-L,L-diaminopimelic acid (SDAP), forming succinate and LL-2,6-diaminopimelate (DAP), an intermediate involved in the bacterial biosynthesis of lysine and meso-diaminopimelic acid, an essential component of bacterial cell walls. The sequence is that of Succinyl-diaminopimelate desuccinylase from Sulfurovum sp. (strain NBC37-1).